We begin with the raw amino-acid sequence, 474 residues long: UDP-N-acetylmuramate--L-alanine ligase (474 aa).

Position 122-128 (122-128 (GTHGKTT)) interacts with ATP.

This sequence belongs to the MurCDEF family.

The protein localises to the cytoplasm. The catalysed reaction is UDP-N-acetyl-alpha-D-muramate + L-alanine + ATP = UDP-N-acetyl-alpha-D-muramoyl-L-alanine + ADP + phosphate + H(+). It functions in the pathway cell wall biogenesis; peptidoglycan biosynthesis. In terms of biological role, cell wall formation. The chain is UDP-N-acetylmuramate--L-alanine ligase from Saccharophagus degradans (strain 2-40 / ATCC 43961 / DSM 17024).